We begin with the raw amino-acid sequence, 223 residues long: Ribose-5-phosphate isomerase A (223 aa).

Residues 26–29 (TGST), 82–85 (DGAD), and 95–98 (KGGG) each bind substrate. The active-site Proton acceptor is Glu-104. Lys-122 lines the substrate pocket.

This sequence belongs to the ribose 5-phosphate isomerase family. In terms of assembly, homodimer.

The catalysed reaction is aldehydo-D-ribose 5-phosphate = D-ribulose 5-phosphate. The protein operates within carbohydrate degradation; pentose phosphate pathway; D-ribose 5-phosphate from D-ribulose 5-phosphate (non-oxidative stage): step 1/1. In terms of biological role, catalyzes the reversible conversion of ribose-5-phosphate to ribulose 5-phosphate. This Streptococcus agalactiae serotype V (strain ATCC BAA-611 / 2603 V/R) protein is Ribose-5-phosphate isomerase A.